Reading from the N-terminus, the 91-residue chain is Non-structural protein 3a (91 aa).

The N-terminal stretch at Met1–Ser19 is a signal peptide.

The protein is Non-structural protein 3a of Tylonycteris pachypus (Lesser bamboo bat).